The following is a 582-amino-acid chain: Hemagglutinin-neuraminidase (582 aa).

The helical transmembrane segment at 35–55 threads the bilayer; sequence ILVLSVQAVTLILVIVNLGEL. 3 disulfides stabilise this stretch: Cys-178/Cys-202, Cys-192/Cys-253, and Cys-244/Cys-257. N-linked (GlcNAc...) asparagine; by host glycans are attached at residues Asn-284 and Asn-329. Intrachain disulfides connect Cys-350–Cys-471, Cys-382–Cys-392, and Cys-465–Cys-475. Residues Asn-400 and Asn-448 are each glycosylated (N-linked (GlcNAc...) asparagine; by host). The N-linked (GlcNAc...) asparagine; by host glycan is linked to Asn-507. A disulfide bridge connects residues Cys-545 and Cys-556.

The protein belongs to the paramyxoviruses hemagglutinin-neuraminidase family. As to quaternary structure, homotetramer; composed of disulfide-linked homodimers. Interacts with F protein trimer.

The protein resides in the virion membrane. It is found in the host cell membrane. It catalyses the reaction Hydrolysis of alpha-(2-&gt;3)-, alpha-(2-&gt;6)-, alpha-(2-&gt;8)- glycosidic linkages of terminal sialic acid residues in oligosaccharides, glycoproteins, glycolipids, colominic acid and synthetic substrates.. Attaches the virus to alpha-2,3-linked sialic acid-containing cell receptors and thereby initiating infection. Binding of HN protein to the receptor induces a conformational change that allows the F protein to trigger virion/cell membranes fusion. Binds to the glycan motifs sialyl Lewis (SLe) and GM2 ganglioside (GM2-glycan). In terms of biological role, neuraminidase activity ensures the efficient spread of the virus by dissociating the mature virions from the neuraminic acid containing glycoproteins. The protein is Hemagglutinin-neuraminidase (HN) of Homo sapiens (Human).